A 240-amino-acid chain; its full sequence is UDP-2,3-diacylglucosamine hydrolase (240 aa).

Mn(2+) contacts are provided by Asp-8, His-10, Asp-41, Asn-79, and His-114. Residue 79-80 participates in substrate binding; it reads NR. Residues Asp-122, Ser-160, Asn-164, Lys-167, and His-195 each coordinate substrate. Mn(2+)-binding residues include His-195 and His-197.

Belongs to the LpxH family. Mn(2+) is required as a cofactor.

The protein resides in the cell inner membrane. It carries out the reaction UDP-2-N,3-O-bis[(3R)-3-hydroxytetradecanoyl]-alpha-D-glucosamine + H2O = 2-N,3-O-bis[(3R)-3-hydroxytetradecanoyl]-alpha-D-glucosaminyl 1-phosphate + UMP + 2 H(+). It participates in glycolipid biosynthesis; lipid IV(A) biosynthesis; lipid IV(A) from (3R)-3-hydroxytetradecanoyl-[acyl-carrier-protein] and UDP-N-acetyl-alpha-D-glucosamine: step 4/6. Functionally, hydrolyzes the pyrophosphate bond of UDP-2,3-diacylglucosamine to yield 2,3-diacylglucosamine 1-phosphate (lipid X) and UMP by catalyzing the attack of water at the alpha-P atom. Involved in the biosynthesis of lipid A, a phosphorylated glycolipid that anchors the lipopolysaccharide to the outer membrane of the cell. The sequence is that of UDP-2,3-diacylglucosamine hydrolase from Yersinia pseudotuberculosis serotype O:1b (strain IP 31758).